Consider the following 578-residue polypeptide: Arginine--tRNA ligase (578 aa).

The 'HIGH' region signature appears at 127–137; it reads PNLAKEMHVGH.

Belongs to the class-I aminoacyl-tRNA synthetase family. Monomer.

Its subcellular location is the cytoplasm. The enzyme catalyses tRNA(Arg) + L-arginine + ATP = L-arginyl-tRNA(Arg) + AMP + diphosphate. This is Arginine--tRNA ligase from Pseudomonas savastanoi pv. phaseolicola (strain 1448A / Race 6) (Pseudomonas syringae pv. phaseolicola (strain 1448A / Race 6)).